A 685-amino-acid polypeptide reads, in one-letter code: Transforming growth factor beta activator LRRC33 (685 aa).

Residues Met-1–Gly-27 form the signal peptide. Residues His-28–Ser-640 are Extracellular-facing. The LRRNT domain maps to Pro-29–Pro-56. LRR repeat units lie at residues His-57 to Tyr-79, Pro-80 to Glu-102, Ser-103 to Ser-129, Leu-130 to Asn-154, Leu-155 to Asp-178, His-180 to His-201, and Met-202 to Gln-225. Asn-154 carries an N-linked (GlcNAc...) asparagine glycan. N-linked (GlcNAc...) asparagine glycosylation is found at Asn-230 and Asn-244. 2 LRR repeats span residues Thr-248–Asn-271 and Ile-273–Asn-296. 5 N-linked (GlcNAc...) asparagine glycosylation sites follow: Asn-291, Asn-296, Asn-309, Asn-312, and Asn-325. LRR repeat units lie at residues Leu-326–Gln-349, Pro-351–Leu-373, Pro-374–Lys-397, Leu-400–Ser-423, Pro-425–Gly-447, Met-457–Gly-480, Ser-482–Gly-503, Ala-505–Tyr-526, Thr-527–Leu-549, Leu-551–Leu-571, and Ala-573–Thr-596. Asn-402 and Asn-407 each carry an N-linked (GlcNAc...) asparagine glycan. Residue Asn-533 is glycosylated (N-linked (GlcNAc...) asparagine). One can recognise an LRRCT domain in the interval Phe-597–Asn-635. A helical transmembrane segment spans residues Val-641 to Ile-661. Residues Tyr-662 to Tyr-685 lie on the Cytoplasmic side of the membrane.

This sequence belongs to the LRRC32/LRRC33 family.

It is found in the cell membrane. It localises to the endoplasmic reticulum membrane. Functionally, key regulator of transforming growth factor beta-1 (TGFB1) specifically required for microglia function in the nervous system. Required for activation of latent TGF-beta-1 in macrophages and microglia: associates specifically via disulfide bonds with the Latency-associated peptide (LAP), which is the regulatory chain of TGFB1, and regulates integrin-dependent activation of TGF-beta-1. TGF-beta-1 activation mediated by lrrc33/nrros is highly localized: there is little spreading of TGF-beta-1 activated from one microglial cell to neighboring microglia, suggesting the existence of localized and selective activation of TGF-beta-1 by lrrc33/nrros. This Danio rerio (Zebrafish) protein is Transforming growth factor beta activator LRRC33.